The chain runs to 156 residues: Bacterial microcompartment shell protein PduK (156 aa).

The 86-residue stretch at 4–89 (SLGLLEVSGL…PGDGILSHSV (86 aa)) folds into the BMC domain. Residues 81–119 (GDGILSHSVTPESESEPAPAPTPVVPHEEIPEDHAAPEA) form a disordered region. Residues 106–116 (PHEEIPEDHAA) show a composition bias toward basic and acidic residues.

Belongs to the bacterial microcompartments protein family. Interacts with shell protein PduA and assembly protein PduM. Interacts with PduP, probably with its first 18 residues. The cofactor is Fe cation.

The protein resides in the bacterial microcompartment. It participates in polyol metabolism; 1,2-propanediol degradation. Its function is as follows. A minor shell protein of the bacterial microcompartment (BMC) dedicated to 1,2-propanediol (1,2-PD) degradation. Functionally, expression of a cosmid containing the full 21-gene pdu operon in E.coli allows E.coli to grow on 1,2-propanediol (1,2-PD) with the appearance of bacterial microcompartments (BMC) in its cytoplasm. Overexpression of this protein leads to the appearance of a single large aggregate complex in the cytoplasm. In terms of biological role, the 1,2-PD-specific bacterial microcompartment (BMC) concentrates low levels of 1,2-PD catabolic enzymes, concentrates volatile reaction intermediates thus enhancing pathway flux and keeps the level of toxic, mutagenic propionaldehyde low. The protein is Bacterial microcompartment shell protein PduK of Citrobacter freundii.